A 268-amino-acid polypeptide reads, in one-letter code: Resolvase (268 aa).

The Tyr recombinase domain occupies 47 to 250 (ELPKYLLAPE…FALDVAARHR (204 aa)). Residues R82, K114, H202, R205, and H228 contribute to the active site. Residue Y237 is the O-(3'-phospho-DNA)-tyrosine intermediate of the active site.

Belongs to the 'phage' integrase family.

Functionally, acts as a repressor of transcription and as a site-specific resolvase that cleaves at the RfsF site. This chain is Resolvase (resD), found in Escherichia coli (strain K12).